The primary structure comprises 232 residues: MAKISKRRQAFAAKVDRQKLYAIEDALSLVKECASAKFDESIDVAVQLGIDAKKSDQVVRGSVVLPAGTGKSVRVAVFAQGEKAEQARAAGAEIVGMEDLAEQIKAGQMDFDIVIASPDTMRIVGTLGQILGPRGLMPNPKVGTVTPDVATAVKNAKAGQVQFRVDKAGIIHATIGRASFEPTALRSNLSALIEALQKAKPATSKGVYLRKIALSSTMGVGVRVDHATLAAQ.

The protein belongs to the universal ribosomal protein uL1 family. Part of the 50S ribosomal subunit.

Binds directly to 23S rRNA. The L1 stalk is quite mobile in the ribosome, and is involved in E site tRNA release. Its function is as follows. Protein L1 is also a translational repressor protein, it controls the translation of the L11 operon by binding to its mRNA. In Burkholderia cenocepacia (strain HI2424), this protein is Large ribosomal subunit protein uL1.